We begin with the raw amino-acid sequence, 129 residues long: Small ribosomal subunit protein uS9 (129 aa).

Residues 108 to 129 are disordered; it reads RMVERKKYGKKKARKSFQFSKR. Residues 114 to 129 show a composition bias toward basic residues; the sequence is KYGKKKARKSFQFSKR.

It belongs to the universal ribosomal protein uS9 family.

The sequence is that of Small ribosomal subunit protein uS9 from Chlorobaculum tepidum (strain ATCC 49652 / DSM 12025 / NBRC 103806 / TLS) (Chlorobium tepidum).